Reading from the N-terminus, the 175-residue chain is Large ribosomal subunit protein uL6 (175 aa).

It belongs to the universal ribosomal protein uL6 family. Part of the 50S ribosomal subunit.

Its function is as follows. This protein binds to the 23S rRNA, and is important in its secondary structure. It is located near the subunit interface in the base of the L7/L12 stalk, and near the tRNA binding site of the peptidyltransferase center. The chain is Large ribosomal subunit protein uL6 from Xanthomonas axonopodis pv. citri (strain 306).